The following is a 266-amino-acid chain: Aliphatic sulfonates import ATP-binding protein SsuB (266 aa).

Residues 23 to 244 (LALDAITKHY…RRGSAKLAEL (222 aa)) enclose the ABC transporter domain. 55–62 (GRSGCGKS) contributes to the ATP binding site.

Belongs to the ABC transporter superfamily. Aliphatic sulfonates importer (TC 3.A.1.17.2) family. In terms of assembly, the complex is composed of two ATP-binding proteins (SsuB), two transmembrane proteins (SsuC) and a solute-binding protein (SsuA).

It is found in the cell inner membrane. The catalysed reaction is ATP + H2O + aliphatic sulfonate-[sulfonate-binding protein]Side 1 = ADP + phosphate + aliphatic sulfonateSide 2 + [sulfonate-binding protein]Side 1.. Functionally, part of the ABC transporter complex SsuABC involved in aliphatic sulfonates import. Responsible for energy coupling to the transport system. The polypeptide is Aliphatic sulfonates import ATP-binding protein SsuB (Pectobacterium atrosepticum (strain SCRI 1043 / ATCC BAA-672) (Erwinia carotovora subsp. atroseptica)).